Consider the following 1061-residue polypeptide: NACHT, LRR and PYD domains-containing protein 12 (1061 aa).

The 95-residue stretch at 1–95 (MLRTAGRDGL…WERGQREDLV (95 aa)) folds into the Pyrin domain. Residues 129–201 (YRDYVRRKFR…SPIKIETLFE (73 aa)) enclose the FISNA domain. Positions 211-528 (RTVVMQGAAG…EFFAAMYYIL (318 aa)) constitute an NACHT domain. Residue 217–224 (GAAGIGKS) participates in ATP binding. LRR repeat units lie at residues 828 to 848 (HLVE…RLLC), 857 to 878 (RLRT…ELAS), 885 to 906 (SLRE…LLCE), 914 to 935 (KLQT…GLSV), 942 to 962 (NLRE…WLLA), 971 to 992 (RLQK…NLYF), 999 to 1020 (TLTD…LLCK), and 1028 to 1049 (KLRV…RLAA).

This sequence belongs to the NLRP family. Interacts (via pyrin domain) with ASC. Interacts (via pyrin domain) with FAF1 (via UBA domain). Interacts with MAP3K14; this interaction promotes proteasomal degradation of MAP3K14. Interacts with NOD2; this interaction promotes degradation of NOD2 through the ubiquitin-proteasome pathway. Interacts with HSPA1A and HSPA8. Interacts with HSP90AA1. Interacts with TRIM25; this interaction inhibits RIGI-mediated signaling pathway. Detected only in peripheral blood leukocytes, predominantly in eosinophils and granulocytes, and at lower levels in monocytes.

The protein localises to the cytoplasm. Its function is as follows. Plays an essential role as an potent mitigator of inflammation. Primarily expressed in dendritic cells and macrophages, inhibits both canonical and non-canonical NF-kappa-B and ERK activation pathways. Functions as a negative regulator of NOD2 by targeting it to degradation via the proteasome pathway. In turn, promotes bacterial tolerance. Also inhibits the RIGI-mediated immune signaling against RNA viruses by reducing the E3 ubiquitin ligase TRIM25-mediated 'Lys-63'-linked RIGI activation but enhancing the E3 ubiquitin ligase RNF125-mediated 'Lys-48'-linked RIGI degradation. Also acts as a negative regulator of inflammatory response to mitigate obesity and obesity-associated diseases in adipose tissue. The sequence is that of NACHT, LRR and PYD domains-containing protein 12 (NLRP12) from Homo sapiens (Human).